We begin with the raw amino-acid sequence, 76 residues long: uncharacterized protein (76 aa).

This is an uncharacterized protein from Escherichia coli O157:H7.